Here is a 253-residue protein sequence, read N- to C-terminus: Hydroxyacylglutathione hydrolase (253 aa).

7 residues coordinate Zn(2+): His59, His61, Asp63, His64, His118, Asp143, and His181.

Belongs to the metallo-beta-lactamase superfamily. Glyoxalase II family. Monomer. The cofactor is Zn(2+).

It carries out the reaction an S-(2-hydroxyacyl)glutathione + H2O = a 2-hydroxy carboxylate + glutathione + H(+). It functions in the pathway secondary metabolite metabolism; methylglyoxal degradation; (R)-lactate from methylglyoxal: step 2/2. Its function is as follows. Thiolesterase that catalyzes the hydrolysis of S-D-lactoyl-glutathione to form glutathione and D-lactic acid. The chain is Hydroxyacylglutathione hydrolase from Prochlorococcus marinus (strain MIT 9211).